Reading from the N-terminus, the 271-residue chain is TIP41-like protein (271 aa).

Position 106 is an N6-acetyllysine (Lys106). Positions 173 to 271 (RVMPSSFFLL…PVDSESAPSE (99 aa)) are interaction with PPP2CA. Phosphoserine occurs at positions 265 and 270.

The protein belongs to the TIP41 family. Interacts with PPP2CA. Interacts with PPP2CB, PPP4C and PPP6C. Interacts with IGBP1; the interaction is dependent on PPP2CA. Associates with a protein phosphatase 2A PP2A(C):IGBP1 complex. Interacts with PPP4C and PPP4R2.

The protein localises to the cytoplasm. Functionally, may be a allosteric regulator of serine/threonine-protein phosphatase 2A (PP2A). Inhibits catalytic activity of the PP2A(D) core complex in vitro. The PP2A(C):TIPRL complex does not show phosphatase activity. Acts as a negative regulator of serine/threonine-protein phosphatase 4 probably by inhibiting the formation of the active PPP4C:PPP4R2 complex; the function is proposed to implicate it in DNA damage response by promoting H2AX phosphorylated on Ser-140 (gamma-H2AX). May play a role in the regulation of ATM/ATR signaling pathway controlling DNA replication and repair. This Rattus norvegicus (Rat) protein is TIP41-like protein (Tiprl).